Here is a 145-residue protein sequence, read N- to C-terminus: Shadow of prion protein (145 aa).

Residues 1–24 (MNWAAAVCWALLLAATFLCDGSAA) form the signal peptide. Asparagine 105 carries an N-linked (GlcNAc...) asparagine glycan. Serine 119 carries the GPI-anchor amidated serine lipid modification. The propeptide at 120–145 (GAGPTGHRHLCPLLGGALGALRLLRP) is removed in mature form.

The protein belongs to the SPRN family. Post-translationally, N-glycosylated. Mainly expressed in brain.

The protein resides in the cell membrane. Its function is as follows. Prion-like protein that has PrP(C)-like neuroprotective activity. May act as a modulator for the biological actions of normal and abnormal PrP. This Ovis aries (Sheep) protein is Shadow of prion protein (SPRN).